An 80-amino-acid chain; its full sequence is MKRILIAPVRFYQRFISPVFPPSCRFDLTCSNYMIQAIEKHGFKGVLMGLARILRCHPWSKTGKDPVPDHFSLKRNQEGE.

The segment at 61-80 (KTGKDPVPDHFSLKRNQEGE) is disordered. Over residues 62–80 (TGKDPVPDHFSLKRNQEGE) the composition is skewed to basic and acidic residues.

The protein belongs to the UPF0161 family.

The protein resides in the cell membrane. Functionally, could be involved in insertion of integral membrane proteins into the membrane. This chain is Putative membrane protein insertion efficiency factor, found in Streptococcus pneumoniae (strain 70585).